The chain runs to 91 residues: Putative defensin-like protein 221 (91 aa).

The signal sequence occupies residues 1–19 (MKTLFFFLTIAVLVSSCTS). 3 cysteine pairs are disulfide-bonded: Cys61–Cys78, Cys64–Cys83, and Cys68–Cys85.

It belongs to the DEFL family.

The protein localises to the secreted. The sequence is that of Putative defensin-like protein 221 from Arabidopsis thaliana (Mouse-ear cress).